The following is a 224-amino-acid chain: Peroxiredoxin-6 (224 aa).

Residues 4 to 168 (LLLGDEAPNF…ILRVVDSLQL (165 aa)) enclose the Thioredoxin domain. The interval 30 to 39 (DSWGILFSHP) is required and sufficient for targeting to lysosomes and lamellar bodies. The active-site Cysteine sulfenic acid (-SOH) intermediate; for peroxidase activity is Cys-46. Tyr-88 is subject to Phosphotyrosine. Residue Asp-139 is the For phospholipase activity of the active site. The residue at position 176 (Thr-176) is a Phosphothreonine; by MAPK.

The protein belongs to the peroxiredoxin family. Prx6 subfamily. In terms of assembly, homodimer. Interacts with GSTP1; mediates PRDX6 glutathionylation and regeneration. Post-translationally, irreversibly inactivated by overoxidation of Cys-46 to sulfinic acid (Cys-SO(2)H) and sulfonic acid (Cys-SO(3)H) forms upon oxidative stress. In terms of processing, phosphorylation at Thr-176 by MAP kinases increases the phospholipase activity of the enzyme. The phosphorylated form exhibits a greater lysophosphatidylcholine acyltransferase activity compared to the non-phosphorylated form.

The protein localises to the cytoplasm. It is found in the lysosome. The catalysed reaction is a hydroperoxide + 2 glutathione = an alcohol + glutathione disulfide + H2O. It catalyses the reaction a 1,2-diacyl-sn-glycero-3-phosphocholine + H2O = a 1-acyl-sn-glycero-3-phosphocholine + a fatty acid + H(+). The enzyme catalyses a 1-acyl-sn-glycero-3-phosphocholine + an acyl-CoA = a 1,2-diacyl-sn-glycero-3-phosphocholine + CoA. It carries out the reaction 1-hexadecanoyl-sn-glycero-3-phosphocholine + hexadecanoyl-CoA = 1,2-dihexadecanoyl-sn-glycero-3-phosphocholine + CoA. The catalysed reaction is 1,2-dihexadecanoyl-sn-glycero-3-phosphocholine + H2O = 1-hexadecanoyl-sn-glycero-3-phosphocholine + hexadecanoate + H(+). In terms of biological role, thiol-specific peroxidase that catalyzes the reduction of hydrogen peroxide and organic hydroperoxides to water and alcohols, respectively. Can reduce H(2)O(2) and short chain organic, fatty acid, and phospholipid hydroperoxides. Also has phospholipase activity, and can therefore either reduce the oxidized sn-2 fatty acyl group of phospholipids (peroxidase activity) or hydrolyze the sn-2 ester bond of phospholipids (phospholipase activity). These activities are dependent on binding to phospholipids at acidic pH and to oxidized phospholipds at cytosolic pH. Plays a role in cell protection against oxidative stress by detoxifying peroxides and in phospholipid homeostasis. Exhibits acyl-CoA-dependent lysophospholipid acyltransferase which mediates the conversion of lysophosphatidylcholine (1-acyl-sn-glycero-3-phosphocholine or LPC) into phosphatidylcholine (1,2-diacyl-sn-glycero-3-phosphocholine or PC). Shows a clear preference for LPC as the lysophospholipid and for palmitoyl CoA as the fatty acyl substrate. In Gallus gallus (Chicken), this protein is Peroxiredoxin-6 (PRDX6).